We begin with the raw amino-acid sequence, 443 residues long: Chromosomal replication initiator protein DnaA (443 aa).

The segment at Met-1–Lys-73 is domain I, interacts with DnaA modulators. A domain II region spans residues Lys-73 to Ser-106. The segment at Thr-107–Ser-323 is domain III, AAA+ region. Residues Gly-151, Gly-153, Lys-154, and Thr-155 each contribute to the ATP site. Residues Asn-324–Tyr-443 form a domain IV, binds dsDNA region.

The protein belongs to the DnaA family. Oligomerizes as a right-handed, spiral filament on DNA at oriC.

It localises to the cytoplasm. Its function is as follows. Plays an essential role in the initiation and regulation of chromosomal replication. ATP-DnaA binds to the origin of replication (oriC) to initiate formation of the DNA replication initiation complex once per cell cycle. Binds the DnaA box (a 9 base pair repeat at the origin) and separates the double-stranded (ds)DNA. Forms a right-handed helical filament on oriC DNA; dsDNA binds to the exterior of the filament while single-stranded (ss)DNA is stabiized in the filament's interior. The ATP-DnaA-oriC complex binds and stabilizes one strand of the AT-rich DNA unwinding element (DUE), permitting loading of DNA polymerase. After initiation quickly degrades to an ADP-DnaA complex that is not apt for DNA replication. Binds acidic phospholipids. In Thermoanaerobacter pseudethanolicus (strain ATCC 33223 / 39E) (Clostridium thermohydrosulfuricum), this protein is Chromosomal replication initiator protein DnaA.